Here is a 1311-residue protein sequence, read N- to C-terminus: Zinc finger protein 521 (1311 aa).

Basic residues predominate over residues 1–10 (MSRRKQAKPR). Residues 1–37 (MSRRKQAKPRSLKDPNCKLEDKTEDGEALDCKKRPED) are disordered. Residues 11-21 (SLKDPNCKLED) show a composition bias toward basic and acidic residues. The C2H2-type 1; degenerate zinc finger occupies 47–67 (HSCDSCLQVFESLSDITEHKI). Residues 81 to 108 (DPTCSWPASSPSSKDQTSPSHGEGCDFG) are disordered. Low complexity predominate over residues 87–102 (PASSPSSKDQTSPSHG). 7 consecutive C2H2-type zinc fingers follow at residues 118 to 140 (YPCQ…EQSH), 146 to 168 (FKCT…IKLH), 174 to 196 (YHCS…LKTH), 202 to 224 (YKCA…MQVH), 246 to 269 (QKCS…AECH), 281 to 304 (LQCV…EQVH), and 310 to 332 (NSCS…MDSH). A compositionally biased stretch (low complexity) spans 349 to 358 (VGYTSVSSTT). Positions 349–397 (VGYTSVSSTTPDSNLSVDSSTMVEAAPPIPKSRGRKRAAQQTPDMTGPS) are disordered. Polar residues-rich tracts occupy residues 359–370 (PDSNLSVDSSTM) and 387–397 (AQQTPDMTGPS). The C2H2-type 9; degenerate zinc finger occupies 405–429 (YSCIYCNKQLFSSLAVLQIHLKTMH). 3 C2H2-type zinc fingers span residues 437–460 (HICQ…KQVH), 477–500 (YQCN…RCSH), and 513–536 (FFCP…RQVH). The residue at position 546 (Ser546) is a Phosphoserine. The segment at 560–585 (YSCSYCTNSPIFNSVLKLNKHIKENH) adopts a C2H2-type 13; atypical zinc-finger fold. Residues Ser605 and Ser608 each carry the phosphoserine modification. 7 consecutive C2H2-type zinc fingers follow at residues 634 to 656 (YICN…LKTH), 664 to 686 (LTCP…VTIH), 694 to 717 (YICE…LDMH), 722 to 745 (FRCT…AVKH), 752 to 775 (YRCT…KHNH), 783 to 805 (HKCI…ITTH), and 809 to 832 (YNCK…REKH). Positions 863–882 (TNSQESHNSHDGSEEDVDTS) are disordered. The segment at 886 to 908 (YGCDICGAAYTMETLLQNHQLRD) adopts a C2H2-type 21; degenerate zinc-finger fold. C2H2-type zinc fingers lie at residues 930–952 (YKCN…MQTH), 959–981 (YMCP…KVTH), and 1020–1042 (FRCV…GTFH). The segment at 1065-1083 (YKCASCLKEFRSKQDLVKL) adopts a C2H2-type 25; degenerate zinc-finger fold. The C2H2-type 26 zinc-finger motif lies at 1138-1161 (TRCSSCNVKFESESELQNHIQTIH). Lys1146 is covalently cross-linked (Glycyl lysine isopeptide (Lys-Gly) (interchain with G-Cter in SUMO2)). Residues 1168–1178 (SNSTQLKTPQV) are compositionally biased toward polar residues. Positions 1168 to 1188 (SNSTQLKTPQVSPMPRISPSQ) are disordered. 4 consecutive C2H2-type zinc fingers follow at residues 1195-1217 (YQCI…VANH), 1225-1247 (HECK…LIEH), 1256-1279 (FKCP…FSAH), and 1286-1309 (YDCT…MTQH).

Belongs to the krueppel C2H2-type zinc-finger protein family. As to quaternary structure, interacts with EBF1. Interacts with SMAD1 and SMAD4. As to expression, predominantly expressed in hematopoietic cells. Present in organs and tissues that contain stem and progenitor cells, myeloid and/or lymphoid: placenta, spleen, lymph nodes, thymus, bone marrow and fetal liver. Within the hematopoietic system, it is abundant in CD34(+) cells but undetectable in mature peripheral blood leukocytes, and its levels rapidly decrease during the differentiation of CD34(+) cells in response to hemopoietins.

It localises to the nucleus. Transcription factor that can both act as an activator or a repressor depending on the context. Involved in BMP signaling and in the regulation of the immature compartment of the hematopoietic system. Associates with SMADs in response to BMP2 leading to activate transcription of BMP target genes. Acts as a transcriptional repressor via its interaction with EBF1, a transcription factor involved specification of B-cell lineage; this interaction preventing EBF1 to bind DNA and activate target genes. In Homo sapiens (Human), this protein is Zinc finger protein 521 (ZNF521).